The sequence spans 154 residues: MGLSDGEWQLVLNVWGKVEADIPSHGQEVLIRLFKGHPETLEKFDKFKHLKSEDEMKASEDLKKHGVTVLTALGGILKKKGHHEAEIKPLAQSHATKHKIPVKYLELISESIIQVLQSKHPGDFGADAQGAMNKALELFRNDMAAKYKELGFQG.

Residues 2-148 form the Globin domain; it reads GLSDGEWQLV…FRNDMAAKYK (147 aa). Position 4 is a phosphoserine (S4). H65 lines the nitrite pocket. H65 serves as a coordination point for O2. At T68 the chain carries Phosphothreonine. A heme b-binding site is contributed by H94.

This sequence belongs to the globin family. Monomeric.

Its subcellular location is the cytoplasm. The protein localises to the sarcoplasm. The enzyme catalyses Fe(III)-heme b-[protein] + nitric oxide + H2O = Fe(II)-heme b-[protein] + nitrite + 2 H(+). It catalyses the reaction H2O2 + AH2 = A + 2 H2O. Functionally, monomeric heme protein which primary function is to store oxygen and facilitate its diffusion within muscle tissues. Reversibly binds oxygen through a pentacoordinated heme iron and enables its timely and efficient release as needed during periods of heightened demand. Depending on the oxidative conditions of tissues and cells, and in addition to its ability to bind oxygen, it also has a nitrite reductase activity whereby it regulates the production of bioactive nitric oxide. Under stress conditions, like hypoxia and anoxia, it also protects cells against reactive oxygen species thanks to its pseudoperoxidase activity. In Macaca fascicularis (Crab-eating macaque), this protein is Myoglobin (MB).